The following is a 202-amino-acid chain: Cytochrome c oxidase assembly protein CtaG (202 aa).

Over 1-14 the chain is Cytoplasmic; the sequence is MSENAGTPKKQGRN. Residues 15-37 traverse the membrane as a helical; Signal-anchor for type II membrane protein segment; the sequence is NGAVVMMCLSFVFGMGAMSYAAV. The Periplasmic portion of the chain corresponds to 38–202; that stretch reads PLYRIFCQVT…GGAEKIEKKL (165 aa).

Belongs to the COX11/CtaG family.

It is found in the cell inner membrane. Exerts its effect at some terminal stage of cytochrome c oxidase synthesis, probably by being involved in the insertion of the copper B into subunit I. This chain is Cytochrome c oxidase assembly protein CtaG, found in Rhizobium johnstonii (strain DSM 114642 / LMG 32736 / 3841) (Rhizobium leguminosarum bv. viciae).